A 323-amino-acid polypeptide reads, in one-letter code: Acetyl-coenzyme A carboxylase carboxyl transferase subunit alpha (323 aa).

A CoA carboxyltransferase C-terminal domain is found at 36–293 (ELELLSAKAQ…KEEVVKNLQI (258 aa)).

This sequence belongs to the AccA family. In terms of assembly, acetyl-CoA carboxylase is a heterohexamer composed of biotin carboxyl carrier protein (AccB), biotin carboxylase (AccC) and two subunits each of ACCase subunit alpha (AccA) and ACCase subunit beta (AccD).

Its subcellular location is the cytoplasm. The catalysed reaction is N(6)-carboxybiotinyl-L-lysyl-[protein] + acetyl-CoA = N(6)-biotinyl-L-lysyl-[protein] + malonyl-CoA. It participates in lipid metabolism; malonyl-CoA biosynthesis; malonyl-CoA from acetyl-CoA: step 1/1. Component of the acetyl coenzyme A carboxylase (ACC) complex. First, biotin carboxylase catalyzes the carboxylation of biotin on its carrier protein (BCCP) and then the CO(2) group is transferred by the carboxyltransferase to acetyl-CoA to form malonyl-CoA. The polypeptide is Acetyl-coenzyme A carboxylase carboxyl transferase subunit alpha (Carboxydothermus hydrogenoformans (strain ATCC BAA-161 / DSM 6008 / Z-2901)).